The chain runs to 163 residues: Disulfide bond formation protein B 1 (163 aa).

Topologically, residues 1 to 9 (MPLASPRQL) are cytoplasmic. The chain crosses the membrane as a helical span at residues 10-26 (FLLAFLACVAIMGGALY). At 27–44 (LEHVVGLEACPLCVVQRI) the chain is on the periplasmic side. Cysteine 36 and cysteine 39 form a disulfide bridge. The chain crosses the membrane as a helical span at residues 45–61 (FFILIGLTCLAGAIQGP). Residues 62-67 (GLRGRR) lie on the Cytoplasmic side of the membrane. A helical transmembrane segment spans residues 68-85 (IYSVLVFLLALGGGATAA). The Periplasmic portion of the chain corresponds to 86 to 142 (RQVWLQTVPLDQLPACLPSLDYMMQALPFQEVIRLVLHGTADCAQVSWTLFTLSIPE). Cysteine 101 and cysteine 128 are disulfide-bonded. A helical membrane pass occupies residues 143-161 (WSLLAFVAYLGFSIVQFLR). The Cytoplasmic segment spans residues 162-163 (RA).

The protein belongs to the DsbB family.

The protein resides in the cell inner membrane. In terms of biological role, required for disulfide bond formation in some periplasmic proteins. Acts by oxidizing the DsbA protein. This chain is Disulfide bond formation protein B 1 (dsbB1), found in Pseudomonas aeruginosa (strain ATCC 15692 / DSM 22644 / CIP 104116 / JCM 14847 / LMG 12228 / 1C / PRS 101 / PAO1).